The sequence spans 423 residues: Immunity-related GTPase family M protein 3 (423 aa).

The IRG-type G domain occupies 83-260; it reads YRVKIAVTGD…PELRNTLQKD (178 aa). Residues 92–99, 117–121, and 200–202 contribute to the GTP site; these read DSGNGMSS, TGVVR, and KLD.

The protein belongs to the TRAFAC class dynamin-like GTPase superfamily. IRG family.

It localises to the endoplasmic reticulum. The protein resides in the cytoplasmic vesicle membrane. Its subcellular location is the lipid droplet. It catalyses the reaction GTP + H2O = GDP + phosphate + H(+). Immunity-related GTPase that plays important roles in host resistance to acute infection by protozoan, such as Toxoplasma gondii and Leishmania major. Acts as a dynamin-like protein that binds to intracellular membranes and promotes remodeling and trafficking of those membranes. Acts predominantly to restrict acute protozoan infection: expression is required in both hematopoietic and non-hematopoietic cellular compartments and is dependent on Stat1. Only plays a partial role in the control of latent Toxoplasma infection. Involved in the clearance of acute protozoan infections by regulating autophagy, possibly by promoting the fusion of phagosomes with lysosomes for efficient degradation of vacuoles containing parasites. Probably involved in membrane disruption of parasite-containing vacuoles. In addition to its role in resistance to acute infection by protozoan, also acts as a negative regulator of the integrated stress response (ISR) following coxsackievirus B3 infection. Promotes differentiation of activated CD8(+) T-cells. This is Immunity-related GTPase family M protein 3 from Mus musculus (Mouse).